The primary structure comprises 248 residues: mRNA-decapping protein OPG122 (248 aa).

Residues 45 to 227 form the Nudix hydrolase domain; it reads HKRVSVSAIL…IAKYALDTAK (183 aa). Residues 126 to 147 carry the Nudix box motif; it reads GIPKRGENVPECLSREIKEEVN. Mg(2+) is bound at residue E132. Catalysis depends on E141, which acts as the Nucleophile. E145 lines the Mn(2+) pocket. Residue D167 participates in Mg(2+) binding.

The protein belongs to the Nudix hydrolase family. It depends on Mg(2+) as a cofactor. Requires Mn(2+) as cofactor.

The protein localises to the host mitochondrion. Its function is as follows. Decapping enzyme that remove the protective 5'-cap from both host and viral mRNAs to commit transcripts for decay by the cellular exonuclease XRN1. Preferentially targets spliced mRNAs and since all viral genes are intronless, it preferentially targets host over viral transcripts. Acceleration of the turnover of cellular transcripts promotes the shutoff of host protein synthesis and therefore diminish the magnitude of antiviral response. The polypeptide is mRNA-decapping protein OPG122 (OPG122) (Bos taurus (Bovine)).